The following is a 410-amino-acid chain: LL-diaminopimelate aminotransferase (410 aa).

2 residues coordinate substrate: Tyr15 and Gly42. Pyridoxal 5'-phosphate-binding positions include Tyr72, Ser108–Lys109, Tyr132, Asn187, Tyr218, and Ser246–Ser248. 3 residues coordinate substrate: Lys109, Tyr132, and Asn187. Residue Lys249 is modified to N6-(pyridoxal phosphate)lysine. Arg257 and Asn292 together coordinate pyridoxal 5'-phosphate. Asn292 and Arg388 together coordinate substrate.

It belongs to the class-I pyridoxal-phosphate-dependent aminotransferase family. LL-diaminopimelate aminotransferase subfamily. As to quaternary structure, homodimer. Pyridoxal 5'-phosphate is required as a cofactor.

The catalysed reaction is (2S,6S)-2,6-diaminopimelate + 2-oxoglutarate = (S)-2,3,4,5-tetrahydrodipicolinate + L-glutamate + H2O + H(+). It functions in the pathway amino-acid biosynthesis; L-lysine biosynthesis via DAP pathway; LL-2,6-diaminopimelate from (S)-tetrahydrodipicolinate (aminotransferase route): step 1/1. In terms of biological role, involved in the synthesis of meso-diaminopimelate (m-DAP or DL-DAP), required for both lysine and peptidoglycan biosynthesis. Catalyzes the direct conversion of tetrahydrodipicolinate to LL-diaminopimelate. This is LL-diaminopimelate aminotransferase from Geobacter metallireducens (strain ATCC 53774 / DSM 7210 / GS-15).